Here is a 693-residue protein sequence, read N- to C-terminus: Guanyl-specific ribonuclease pgl-3 (693 aa).

Residues 205 to 447 (KKLMIEGPKI…VNRIIESLEK (243 aa)) form an involved in dimerization region. His437 serves as the catalytic Proton acceptor. 3 disordered regions span residues 445-468 (LEKS…GPTT), 523-591 (AEKN…DATP), and 620-693 (SSNG…RGGS). The segment covering 447-468 (KSSSSEPSATAKQTTTSNGPTT) has biased composition (low complexity). 2 stretches are compositionally biased toward polar residues: residues 528 to 548 (NTPS…SPTK) and 569 to 580 (ITKVSPQPQERT). The required for interaction with sepa-1 stretch occupies residues 581 to 614 (GTAWGSGDATPVPLATPVNEYKVSGFGAAPVASG). 3 stretches are compositionally biased toward gly residues: residues 625-634 (SGRGSYGGGR), 641-660 (RGAY…SRGY), and 668-693 (RGSY…RGGS). Positions 633–693 (GRGGDRGGRG…GFFGGSRGGS (61 aa)) are RNA-binding RGG-box.

May form a homodimer. Interacts with pgl-1 and pgl-2; this association is not required for P-granule localization of either pgl-1 or pgl-2. Interacts with sepa-1; the interaction is enhanced in the presence of RNA. Interacts with prmt-1; the interaction is direct. In terms of processing, methylated at arginine residues in the RNA-binding RGG-box by prmt-1. Methylation promotes P-granule degradation by autophagy. Highly expressed in the germline. Expressed in most somatic cells.

It is found in the cytoplasmic granule. It carries out the reaction [RNA] containing guanosine + H2O = an [RNA fragment]-3'-guanosine-3'-phosphate + a 5'-hydroxy-ribonucleotide-3'-[RNA fragment].. In terms of biological role, guanyl-specific endoribonuclease which cleaves the phosphodiester bond in single-stranded RNA between the 3'-guanylic residue and the 5'-OH residue of adjacent nucleotide, resulting in the formation of a corresponding 2',3'-cyclic phosphate intermediate. P-granule component involved in germline development. Together with the P-granule component pgl-1, is involved in the formation of P-granules. Together with pgl-1, probably recruits other granule components such as pos-1, mex-3 and glh-1, and RNA to P-granules. In vitro, binds mRNA; this interaction is required for the formation of liquid-like droplets that resemble P-granules. Most likely recruits pgl-1 into P-granules during autophagy. Associates with adapters such as sepa-1 and is required for the accumulation and degradation of P-granules by autophagy in somatic cells. This ensures exclusive localization of the P-granules in germ cells. In addition, may act redundantly with pgl-1 to protect germ cells from excessive germline apoptosis during normal oogenesis and development of the two gonadal arms. This may in part be through regulating the localization of sir-2.1 which is involved in germ cell apoptosis. May protect somatic cells from excessive apoptosis during normal development. This chain is Guanyl-specific ribonuclease pgl-3, found in Caenorhabditis elegans.